The chain runs to 892 residues: DNA ligase (892 aa).

Residues 1-23 (MTMTNRDDSEQLAWDFDAPESDG) are disordered. Residues 99-103 (DAAYD), 148-149 (SL), and Glu-182 each bind NAD(+). The active-site N6-AMP-lysine intermediate is Lys-184. The NAD(+) site is built by Arg-205, Glu-244, Lys-369, and Lys-393. Cys-490, Cys-493, Cys-509, and Cys-515 together coordinate Zn(2+). In terms of domain architecture, BRCT spans 810-892 (GLPQTLAGKT…KQLLDTGTVE (83 aa)).

The protein belongs to the NAD-dependent DNA ligase family. LigA subfamily. Requires Mg(2+) as cofactor. The cofactor is Mn(2+).

It carries out the reaction NAD(+) + (deoxyribonucleotide)n-3'-hydroxyl + 5'-phospho-(deoxyribonucleotide)m = (deoxyribonucleotide)n+m + AMP + beta-nicotinamide D-nucleotide.. In terms of biological role, DNA ligase that catalyzes the formation of phosphodiester linkages between 5'-phosphoryl and 3'-hydroxyl groups in double-stranded DNA using NAD as a coenzyme and as the energy source for the reaction. It is essential for DNA replication and repair of damaged DNA. The sequence is that of DNA ligase from Bifidobacterium adolescentis (strain ATCC 15703 / DSM 20083 / NCTC 11814 / E194a).